Consider the following 318-residue polypeptide: Olfactory receptor 10H1 (318 aa).

Topologically, residues 1-25 are extracellular; that stretch reads MQRANHSTVTQFILVGFSVFPHLQL. A glycan (N-linked (GlcNAc...) asparagine) is linked at Asn-5. Residues 26-46 form a helical membrane-spanning segment; the sequence is MLFLLFLLMYLFTLLGNLLIM. Residues 47-54 lie on the Cytoplasmic side of the membrane; the sequence is ATVWSERS. The chain crosses the membrane as a helical span at residues 55 to 75; the sequence is LHTPMYLFLCALSVSEILYTV. Topologically, residues 76-99 are extracellular; sequence AIIPRMLADLLSTQRSIAFLACAS. A disulfide bridge links Cys-97 with Cys-189. Residues 100 to 120 form a helical membrane-spanning segment; the sequence is QMFFSFSFGFTHSFLLTVMGY. Over 121 to 139 the chain is Cytoplasmic; it reads DRYVAICHPLRYNVLMSPR. Residues 140-160 form a helical membrane-spanning segment; it reads GCACLVGCSWAGGLVMGMVVT. The Extracellular portion of the chain corresponds to 161–197; it reads SAIFHLAFCGHKEIHHFACHVPPLLKLACGDDVLVVA. A helical transmembrane segment spans residues 198–218; it reads KGVGLVCITALLGCFLLILLS. Topologically, residues 219-238 are cytoplasmic; sequence YAFIVAAILKIPSAEGRNKA. A helical transmembrane segment spans residues 239 to 259; it reads FSTCASHLTVVVVHYGFASVI. The Extracellular portion of the chain corresponds to 260 to 272; that stretch reads YLKPKSPQSLEGD. A helical membrane pass occupies residues 273 to 293; the sequence is TLMGITYTVLTPFLSPIIFSL. The Cytoplasmic portion of the chain corresponds to 294–318; it reads RNKELKVAMKKTFFSKLYPEKNVMM.

Belongs to the G-protein coupled receptor 1 family.

The protein resides in the cell membrane. Its function is as follows. Odorant receptor. This is Olfactory receptor 10H1 (OR10H1) from Homo sapiens (Human).